Here is a 248-residue protein sequence, read N- to C-terminus: Probable transcriptional regulatory protein LAR_0538 (248 aa).

Positions 1 to 22 are disordered; sequence MSGHSKWHNIQGRKNAQDAKRG.

Belongs to the TACO1 family.

The protein localises to the cytoplasm. The polypeptide is Probable transcriptional regulatory protein LAR_0538 (Limosilactobacillus reuteri subsp. reuteri (strain JCM 1112) (Lactobacillus reuteri)).